A 729-amino-acid polypeptide reads, in one-letter code: Fatty acid oxidation complex subunit alpha (729 aa).

An enoyl-CoA hydratase/isomerase region spans residues 1–189 (MLYKGDTLYL…KIGLVDGVVK (189 aa)). Substrate is bound at residue D296. Residues 311–729 (ETPKQAAVLG…ARPVGDLKTA (419 aa)) are 3-hydroxyacyl-CoA dehydrogenase. NAD(+) is bound by residues M324, D343, 400–402 (VVE), K407, and S429. The For 3-hydroxyacyl-CoA dehydrogenase activity role is filled by H450. N453 contributes to the NAD(+) binding site. Substrate contacts are provided by N500 and Y660. Residues 708–729 (RHNEPYYPPVEPARPVGDLKTA) form a disordered region.

It in the N-terminal section; belongs to the enoyl-CoA hydratase/isomerase family. In the C-terminal section; belongs to the 3-hydroxyacyl-CoA dehydrogenase family. Heterotetramer of two alpha chains (FadB) and two beta chains (FadA).

The catalysed reaction is a (3S)-3-hydroxyacyl-CoA + NAD(+) = a 3-oxoacyl-CoA + NADH + H(+). It carries out the reaction a (3S)-3-hydroxyacyl-CoA = a (2E)-enoyl-CoA + H2O. It catalyses the reaction a 4-saturated-(3S)-3-hydroxyacyl-CoA = a (3E)-enoyl-CoA + H2O. The enzyme catalyses (3S)-3-hydroxybutanoyl-CoA = (3R)-3-hydroxybutanoyl-CoA. The catalysed reaction is a (3Z)-enoyl-CoA = a 4-saturated (2E)-enoyl-CoA. It carries out the reaction a (3E)-enoyl-CoA = a 4-saturated (2E)-enoyl-CoA. Its pathway is lipid metabolism; fatty acid beta-oxidation. Functionally, involved in the aerobic and anaerobic degradation of long-chain fatty acids via beta-oxidation cycle. Catalyzes the formation of 3-oxoacyl-CoA from enoyl-CoA via L-3-hydroxyacyl-CoA. It can also use D-3-hydroxyacyl-CoA and cis-3-enoyl-CoA as substrate. In Escherichia coli O7:K1 (strain IAI39 / ExPEC), this protein is Fatty acid oxidation complex subunit alpha.